The following is a 346-amino-acid chain: E3 ubiquitin-protein ligase MARCHF9 (346 aa).

Disordered stretches follow at residues 20–39 (GGGR…GGCG) and 47–92 (STRD…PGAL). Over residues 63–75 (PRARGLAGDKEPR) the composition is skewed to basic and acidic residues. The span at 77–90 (GPLPPPAPPLPPPG) shows a compositional bias: pro residues. The RING-CH-type zinc finger occupies 102 to 162 (DSGLRTPQCR…ELCYFKYQVL (61 aa)). Residues Cys110, Cys113, Cys126, Cys128, His136, Cys139, Cys152, and Cys155 each contribute to the Zn(2+) site. The next 2 membrane-spanning stretches (helical) occupy residues 185–205 (IAAI…LIWS) and 219–239 (LFQI…GLII). Disordered regions lie at residues 273 to 301 (DAGG…RPPA) and 326 to 346 (PPDA…VTTV). Polar residues predominate over residues 284–296 (PRNSRTGPTSGAT).

As to quaternary structure, homodimer. As to expression, ubiquitously expressed.

Its subcellular location is the golgi apparatus membrane. The protein resides in the lysosome membrane. The catalysed reaction is S-ubiquitinyl-[E2 ubiquitin-conjugating enzyme]-L-cysteine + [acceptor protein]-L-lysine = [E2 ubiquitin-conjugating enzyme]-L-cysteine + N(6)-ubiquitinyl-[acceptor protein]-L-lysine.. Its pathway is protein modification; protein ubiquitination. In terms of biological role, E3 ubiquitin-protein ligase that may mediate ubiquitination of MHC-I, CD4 and ICAM1, and promote their subsequent endocytosis and sorting to lysosomes via multivesicular bodies. E3 ubiquitin ligases accept ubiquitin from an E2 ubiquitin-conjugating enzyme in the form of a thioester and then directly transfer the ubiquitin to targeted substrates. In Homo sapiens (Human), this protein is E3 ubiquitin-protein ligase MARCHF9.